The chain runs to 333 residues: Geminin coiled-coil domain-containing protein 1 (333 aa).

Positions 83-118 (QLYRNKQLQDTLLQKEEELARLHEENNHLRQYLNST) form a coiled coil. Positions 145–154 (KEKRKPKEHR) are enriched in basic residues. The disordered stretch occupies residues 145-165 (KEKRKPKEHRHSPAEIPQFKT).

This sequence belongs to the GEMC1 family. Highly phosphorylated by CDK2; stimulates initiation of DNA replication.

Its subcellular location is the nucleus. In terms of biological role, regulator of DNA replication. Promotes initiation of chromosomal DNA replication by mediating TOPBP1- and CDK2-dependent recruitment of CDC45L onto replication origins. In Mus musculus (Mouse), this protein is Geminin coiled-coil domain-containing protein 1 (Gmnc).